Consider the following 93-residue polypeptide: Putative septation protein SpoVG (93 aa).

Belongs to the SpoVG family.

In terms of biological role, could be involved in septation. This is Putative septation protein SpoVG from Alkaliphilus oremlandii (strain OhILAs) (Clostridium oremlandii (strain OhILAs)).